The chain runs to 324 residues: tRNA U34 carboxymethyltransferase (324 aa).

Carboxy-S-adenosyl-L-methionine-binding positions include Lys-92, Trp-106, Lys-111, Gly-131, 153–155 (DPT), 181–182 (IE), Met-197, Tyr-201, and Arg-316.

Belongs to the class I-like SAM-binding methyltransferase superfamily. CmoB family. As to quaternary structure, homotetramer.

It catalyses the reaction carboxy-S-adenosyl-L-methionine + 5-hydroxyuridine(34) in tRNA = 5-carboxymethoxyuridine(34) in tRNA + S-adenosyl-L-homocysteine + H(+). Catalyzes carboxymethyl transfer from carboxy-S-adenosyl-L-methionine (Cx-SAM) to 5-hydroxyuridine (ho5U) to form 5-carboxymethoxyuridine (cmo5U) at position 34 in tRNAs. This is tRNA U34 carboxymethyltransferase from Methylococcus capsulatus (strain ATCC 33009 / NCIMB 11132 / Bath).